Here is a 510-residue protein sequence, read N- to C-terminus: Cytochrome P450 4A6 (510 aa).

Residues M1–S4 constitute a propeptide that is removed on maturation. Heme is bound by residues E321 and C457.

It belongs to the cytochrome P450 family. Heme serves as cofactor. Liver; kidney.

Its subcellular location is the endoplasmic reticulum membrane. It localises to the microsome membrane. The enzyme catalyses an omega-methyl-long-chain fatty acid + reduced [NADPH--hemoprotein reductase] + O2 = an omega-hydroxy-long-chain fatty acid + oxidized [NADPH--hemoprotein reductase] + H2O + H(+). In terms of biological role, cytochromes P450 are a group of heme-thiolate monooxygenases. In liver microsomes, this enzyme is involved in an NADPH-dependent electron transport pathway. It oxidizes a variety of structurally unrelated compounds, including steroids, fatty acids, and xenobiotics. Its function is as follows. The kidney P-450 system is rather specialized for the omega-hydroxylation of fatty acids. Both P450-KA1 and P450-KA2 catalyze the omega- and (omega-1)-hydroxylation of various fatty acids with no drug-metabolizing activity, and hydroxylate prostaglandin A1 and A2 solely at the omega-position. The chain is Cytochrome P450 4A6 (CYP4A6) from Oryctolagus cuniculus (Rabbit).